We begin with the raw amino-acid sequence, 206 residues long: MTDTAASASQPALVRNELNLVWLDMEMTGLDPDNDRIIEIAVVVTNSTLDIAVEGPVFAIHQSDETLAKMDDWNKSTHGRSGLIDRVRASTVTEADAAAQLQAFLAQYVSPGKSPMCGNSICQDRRFMARWMPEFERFFHYRNLDVSTLKELCRRWQPAIYKGFQKRAMHTALADIHESIDELKYYRQHFLIPAASAPAGESAPAA.

Residues 20 to 183 (LVWLDMEMTG…ADIHESIDEL (164 aa)) form the Exonuclease domain. Tyr141 is a catalytic residue.

It belongs to the oligoribonuclease family.

Its subcellular location is the cytoplasm. In terms of biological role, 3'-to-5' exoribonuclease specific for small oligoribonucleotides. In Burkholderia ambifaria (strain ATCC BAA-244 / DSM 16087 / CCUG 44356 / LMG 19182 / AMMD) (Burkholderia cepacia (strain AMMD)), this protein is Oligoribonuclease.